Reading from the N-terminus, the 323-residue chain is tRNA dimethylallyltransferase (323 aa).

ATP is bound at residue 12-19 (GPTAAGKT). Residue 14–19 (TAAGKT) participates in substrate binding. Interaction with substrate tRNA regions lie at residues 37–40 (DSAL) and 161–165 (QRLIR).

It belongs to the IPP transferase family. Monomer. It depends on Mg(2+) as a cofactor.

The enzyme catalyses adenosine(37) in tRNA + dimethylallyl diphosphate = N(6)-dimethylallyladenosine(37) in tRNA + diphosphate. Catalyzes the transfer of a dimethylallyl group onto the adenine at position 37 in tRNAs that read codons beginning with uridine, leading to the formation of N6-(dimethylallyl)adenosine (i(6)A). This Pseudomonas putida (strain W619) protein is tRNA dimethylallyltransferase.